The following is a 760-amino-acid chain: Transferrin receptor protein 1 (760 aa).

Residues 1 to 67 (MMDQARSAFS…KPKRCSGSIC (67 aa)) lie on the Cytoplasmic side of the membrane. A mediates interaction with SH3BP4 region spans residues 1–67 (MMDQARSAFS…KPKRCSGSIC (67 aa)). Ser-10 and Ser-19 each carry phosphoserine. Position 20 is a phosphotyrosine (Tyr-20). Positions 20–23 (YTRF) match the Endocytosis signal motif. Thr-21 carries the post-translational modification Phosphothreonine. Ser-24 carries the phosphoserine modification. The short motif at 58–61 (KPKR) is the Stop-transfer sequence element. Residues Cys-62 and Cys-67 are each lipidated (S-palmitoyl cysteine). A helical; Signal-anchor for type II membrane protein transmembrane segment spans residues 68–88 (YGTIAVIVFFLIGFMIGYLGY). The Extracellular segment spans residues 89–760 (CKGVEPKTEC…GDVWDIDNEF (672 aa)). Residue Thr-104 is glycosylated (O-linked (GalNAc...) threonine). The PA domain maps to 223 to 313 (SKAATVTGKL…GTGDPYTPGF (91 aa)). 2 N-linked (GlcNAc...) asparagine glycosylation sites follow: Asn-251 and Asn-317. The tract at residues 569 to 760 (TMDTYKELIE…GDVWDIDNEF (192 aa)) is ligand-binding. A Cell attachment site; required for binding to transferrin motif is present at residues 646 to 648 (RGD). The N-linked (GlcNAc...) asparagine glycan is linked to Asn-727.

Belongs to the peptidase M28 family. M28B subfamily. As to quaternary structure, homodimer; disulfide-linked. Binds one transferrin or HFE molecule per subunit. Binds the HLA class II histocompatibility antigen, DR1. Interacts with SH3BP3. Interacts with STEAP3; facilitates TFRC endocytosis in erythroid precursor cells. Interacts with GRM2. In terms of assembly, (Microbial infection) Interacts with Guanarito, Junin and Machupo arenavirus glycoprotein complex. (Microbial infection) Interacts with rabies virus protein G. As to quaternary structure, (Microbial infection) Interacts with SARS-CoV-2 spike protein S. Stearoylated by ZDHHC6 which inhibits TFRC-mediated activation of the JNK pathway and promotes mitochondrial fragmentation. Stearoylation does not affect iron uptake. In terms of processing, N- and O-glycosylated, phosphorylated and palmitoylated. The serum form is only glycosylated. Post-translationally, proteolytically cleaved on Arg-100 to produce the soluble serum form (sTfR). Palmitoylated on both Cys-62 and Cys-67. Cys-62 seems to be the major site of palmitoylation.

The protein resides in the cell membrane. It is found in the melanosome. Its subcellular location is the secreted. Cellular uptake of iron occurs via receptor-mediated endocytosis of ligand-occupied transferrin receptor into specialized endosomes. Endosomal acidification leads to iron release. The apotransferrin-receptor complex is then recycled to the cell surface with a return to neutral pH and the concomitant loss of affinity of apotransferrin for its receptor. Transferrin receptor is necessary for development of erythrocytes and the nervous system. A second ligand, the hereditary hemochromatosis protein HFE, competes for binding with transferrin for an overlapping C-terminal binding site. Positively regulates T and B cell proliferation through iron uptake. Acts as a lipid sensor that regulates mitochondrial fusion by regulating activation of the JNK pathway. When dietary levels of stearate (C18:0) are low, promotes activation of the JNK pathway, resulting in HUWE1-mediated ubiquitination and subsequent degradation of the mitofusin MFN2 and inhibition of mitochondrial fusion. When dietary levels of stearate (C18:0) are high, TFRC stearoylation inhibits activation of the JNK pathway and thus degradation of the mitofusin MFN2. Mediates uptake of NICOL1 into fibroblasts where it may regulate extracellular matrix production. Its function is as follows. (Microbial infection) Acts as a receptor for new-world arenaviruses: Guanarito, Junin and Machupo virus. In terms of biological role, (Microbial infection) Acts as a host entry factor for rabies virus that hijacks the endocytosis of TFRC to enter cells. Functionally, (Microbial infection) Acts as a host entry factor for SARS-CoV, MERS-CoV and SARS-CoV-2 viruses that hijack the endocytosis of TFRC to enter cells. The protein is Transferrin receptor protein 1 (TFRC) of Homo sapiens (Human).